Consider the following 317-residue polypeptide: uncharacterized protein (317 aa).

Residues methionine 1–alanine 16 form the signal peptide. N-linked (GlcNAc...) asparagine glycosylation occurs at asparagine 42. Low complexity-rich tracts occupy residues serine 150–serine 238 and threonine 247–alanine 259. The tract at residues serine 150–alanine 259 is disordered.

This is an uncharacterized protein from Schizosaccharomyces pombe (strain 972 / ATCC 24843) (Fission yeast).